Here is a 562-residue protein sequence, read N- to C-terminus: TBC1 domain family member 24 (562 aa).

Residues lysine 36, arginine 40, lysine 238, arginine 242, and 293–297 contribute to the a 1,2-diacyl-sn-glycero-3-phospho-(1D-myo-inositol) site; that span reads RLFSR. Positions 42–259 constitute a Rab-GAP TBC domain; the sequence is GHWAKSHTLR…FFHKVRGGQP (218 aa). In terms of domain architecture, TLDc spans 337-549; sequence EIVSVKEMRD…ISIIEVWGFK (213 aa). Positions 450–471 are disordered; sequence NSSSADKEANSSQSDKDGIDPS. Positions 454-468 are enriched in basic and acidic residues; it reads ADKEANSSQSDKDGI.

In terms of assembly, interacts with ARF6.

It localises to the cell membrane. Its subcellular location is the cytoplasm. The protein resides in the cytoplasmic vesicle membrane. It is found in the presynapse. Its function is as follows. May act as a GTPase-activating protein for Rab family protein(s). Involved in neuronal projections development, probably through a negative modulation of ARF6 function. Involved in the regulation of synaptic vesicle trafficking. The chain is TBC1 domain family member 24 (tbc1d24) from Xenopus laevis (African clawed frog).